Reading from the N-terminus, the 158-residue chain is 2-C-methyl-D-erythritol 2,4-cyclodiphosphate synthase (158 aa).

A divalent metal cation-binding residues include D9 and H11. Residues 9–11 (DVH) and 35–36 (HS) each bind 4-CDP-2-C-methyl-D-erythritol 2-phosphate. H43 serves as a coordination point for a divalent metal cation. 4-CDP-2-C-methyl-D-erythritol 2-phosphate contacts are provided by residues 57-59 (DIG), 62-66 (FPDTD), 101-107 (AQAPKMA), 133-136 (TTTE), F140, and R143.

The protein belongs to the IspF family. In terms of assembly, homotrimer. The cofactor is a divalent metal cation.

The catalysed reaction is 4-CDP-2-C-methyl-D-erythritol 2-phosphate = 2-C-methyl-D-erythritol 2,4-cyclic diphosphate + CMP. It participates in isoprenoid biosynthesis; isopentenyl diphosphate biosynthesis via DXP pathway; isopentenyl diphosphate from 1-deoxy-D-xylulose 5-phosphate: step 4/6. Its function is as follows. Involved in the biosynthesis of isopentenyl diphosphate (IPP) and dimethylallyl diphosphate (DMAPP), two major building blocks of isoprenoid compounds. Catalyzes the conversion of 4-diphosphocytidyl-2-C-methyl-D-erythritol 2-phosphate (CDP-ME2P) to 2-C-methyl-D-erythritol 2,4-cyclodiphosphate (ME-CPP) with a corresponding release of cytidine 5-monophosphate (CMP). The protein is 2-C-methyl-D-erythritol 2,4-cyclodiphosphate synthase of Vibrio campbellii (strain ATCC BAA-1116).